The chain runs to 398 residues: cAMP-dependent protein kinase, catalytic subunit-like (398 aa).

The 255-residue stretch at 90 to 344 (LERIITIGKG…TQDVKDHKWF (255 aa)) folds into the Protein kinase domain. ATP-binding positions include 96–104 (IGKGTFGRV) and lysine 119. Aspartate 213 functions as the Proton acceptor in the catalytic mechanism. An AGC-kinase C-terminal domain is found at 345-398 (EKVNWDDTLHLRVEPPIVPTLYHPGDTGNFDDYEEDTTGGPLCSQRDRDLFAEW).

It belongs to the protein kinase superfamily. Ser/Thr protein kinase family. cAMP subfamily.

The enzyme catalyses L-seryl-[protein] + ATP = O-phospho-L-seryl-[protein] + ADP + H(+). The catalysed reaction is L-threonyl-[protein] + ATP = O-phospho-L-threonyl-[protein] + ADP + H(+). This chain is cAMP-dependent protein kinase, catalytic subunit-like, found in Caenorhabditis elegans.